The chain runs to 211 residues: MQVILLERVAKLGQMGEVVDVKPGYARNFLLPQGKALSASKANIEAFEQQKAQLEARNLETRKEAEALAAKLDGQQFIVIRSASDSGALYGSVTTRDAAEAATEAGFTVDRKQVVLSPIKELGLHAVQVVLHPEVDATIHLNVARSVEEAELQASGKSIQELAAEEEAAAEFEIQELFDDIGAAASEDEELAETAGVAPAEPSEEDDSAKA.

The interval 183-211 is disordered; it reads AAASEDEELAETAGVAPAEPSEEDDSAKA. Residues 202 to 211 are compositionally biased toward acidic residues; that stretch reads PSEEDDSAKA.

This sequence belongs to the bacterial ribosomal protein bL9 family.

In terms of biological role, binds to the 23S rRNA. This is Large ribosomal subunit protein bL9 from Roseobacter denitrificans (strain ATCC 33942 / OCh 114) (Erythrobacter sp. (strain OCh 114)).